The sequence spans 82 residues: Omega-conotoxin-like Am6.2 (82 aa).

The N-terminal stretch at 1–22 (MKLTCMMIVAVLFLTAWTFVTA) is a signal peptide. The propeptide occupies 23–52 (VPHSSNVLENLYLKARHEMENQEASKLNMR). Intrachain disulfides connect C56-C73, C63-C77, and C72-C81. Position 76 is a 6'-bromotryptophan; partial; in Am6.2b (major form) (W76).

The protein belongs to the conotoxin O1 family. Post-translationally, mostly non-hydroxylated. Two forms of this peptides have been described. Am6.2a (Am3136) is not unmodified, while Am6.2b (Am3214) is Trp-76 brominated. Both forms are found in venom with a much more abundant brominated form. In terms of tissue distribution, expressed by the venom duct.

The protein resides in the secreted. In terms of biological role, omega-conotoxins act at presynaptic membranes, they bind and block voltage-gated calcium channels (Cav). This is Omega-conotoxin-like Am6.2 from Conus amadis (Amadis cone).